The primary structure comprises 1192 residues: Chromosome partition protein Smc (1192 aa).

31–38 (PNGSGKSN) provides a ligand contact to ATP. Coiled coils occupy residues 164 to 197 (AGIS…VDEV), 234 to 292 (LTLS…RSEL), 333 to 369 (SAIA…RDVE), and 396 to 464 (EHEA…DAKV). The region spanning 522-636 (KDLVGIVADC…LVDTLATAIG (115 aa)) is the SMC hinge domain. 3 coiled-coil regions span residues 676–736 (RSEL…AKLH), 772–902 (ELAV…EREA), and 986–1030 (GSVN…INAD).

The protein belongs to the SMC family. As to quaternary structure, homodimer.

It localises to the cytoplasm. Its function is as follows. Required for chromosome condensation and partitioning. The polypeptide is Chromosome partition protein Smc (Rhodopirellula baltica (strain DSM 10527 / NCIMB 13988 / SH1)).